A 314-amino-acid chain; its full sequence is Large ribosomal subunit protein uL10 (314 aa).

A disordered region spans residues 285–314 (GAAAGGAAAEEEKEEEEESDEEGGFGDLFG). Residues 293–308 (AEEEKEEEEESDEEGG) show a composition bias toward acidic residues. Ser303 is subject to Phosphoserine; by CK1.

This sequence belongs to the universal ribosomal protein uL10 family. Component of the large ribosomal subunit. P0 forms a pentameric complex by interaction with dimers of P1 and P2. Phosphorylated.

Ribosomal protein P0 is the functional equivalent of E.coli protein L10. This chain is Large ribosomal subunit protein uL10, found in Podospora anserina (Pleurage anserina).